Consider the following 360-residue polypeptide: Peptide chain release factor 1 (360 aa).

An N5-methylglutamine modification is found at Gln237.

Belongs to the prokaryotic/mitochondrial release factor family. Post-translationally, methylated by PrmC. Methylation increases the termination efficiency of RF1.

Its subcellular location is the cytoplasm. Peptide chain release factor 1 directs the termination of translation in response to the peptide chain termination codons UAG and UAA. The sequence is that of Peptide chain release factor 1 from Saccharophagus degradans (strain 2-40 / ATCC 43961 / DSM 17024).